The chain runs to 187 residues: Adenylate kinase (187 aa).

10–15 (GSGKGT) serves as a coordination point for ATP. An NMP region spans residues 30 to 59 (STGDLLRSEVVAGTPLGLQAKQVMAQGDLV). Residues threonine 31, arginine 36, 57 to 59 (DLV), 85 to 88 (GYPR), and glutamine 92 each bind AMP. The LID stretch occupies residues 126 to 136 (GRAQAEGREDD). ATP is bound at residue arginine 127. AMP is bound by residues arginine 133 and arginine 144. Glycine 172 serves as a coordination point for ATP.

It belongs to the adenylate kinase family. As to quaternary structure, monomer.

The protein resides in the cytoplasm. The catalysed reaction is AMP + ATP = 2 ADP. Its pathway is purine metabolism; AMP biosynthesis via salvage pathway; AMP from ADP: step 1/1. In terms of biological role, catalyzes the reversible transfer of the terminal phosphate group between ATP and AMP. Plays an important role in cellular energy homeostasis and in adenine nucleotide metabolism. The polypeptide is Adenylate kinase (Xylella fastidiosa (strain 9a5c)).